The sequence spans 36 residues: Endoglucanase Cel12A (36 aa).

It belongs to the glycosyl hydrolase 12 (cellulase H) family.

It localises to the secreted. Its subcellular location is the extracellular space. It catalyses the reaction Endohydrolysis of (1-&gt;4)-beta-D-glucosidic linkages in cellulose, lichenin and cereal beta-D-glucans.. In terms of biological role, has carboxymethylcellulase activity. In Gloeophyllum trabeum (Brown rot fungus), this protein is Endoglucanase Cel12A.